We begin with the raw amino-acid sequence, 377 residues long: Opsin, blue-sensitive (377 aa).

Residues 1–56 (MLLHNKTLAGKALAFIAEEGYVPSMREKFLGWNVPPEYSDLVHPHWRAFPAPGKHF) lie on the Extracellular side of the membrane. N-linked (GlcNAc...) asparagine glycosylation is present at N5. A helical transmembrane segment spans residues 57–81 (HIGLAIIYSMLLIMSLVGNCCVIWI). The Cytoplasmic portion of the chain corresponds to 82–93 (FSTSKSLRTPSN). The chain crosses the membrane as a helical span at residues 94 to 119 (MFIVSLAIFDIIMAFEMPMLVISSFM). Over 120-132 (ERMIGWEIGCDVY) the chain is Extracellular. C129 and C206 are oxidised to a cystine. The chain crosses the membrane as a helical span at residues 133-152 (SVFGSISGMGQAMTNAAIAF). The Cytoplasmic segment spans residues 153–170 (DRYRTISCPIDGRLNSKQ). The chain crosses the membrane as a helical span at residues 171–195 (AAVIIAFTWFWVTPFTVLPLLKVWG). Residues 196–219 (RYTTEGFLTTCSFDFLTDDEDTKV) are Extracellular-facing. Residues 220–247 (FVTCIFIWAYVIPLIFIILFYSRLLSSI) traverse the membrane as a helical segment. Over 248–282 (RNHEKMLREQAKKMNVKSLVSNQDKERSAEVRIAK) the chain is Cytoplasmic. Residues 283 to 306 (VAFTIFFLFLLAWTPYATVALIGV) form a helical membrane-spanning segment. The Extracellular portion of the chain corresponds to 307 to 314 (YGNRELLT). The helical transmembrane segment at 315 to 339 (PVSTMLPAVFAKTVSCIDPWIYAIN) threads the bilayer. At K326 the chain carries N6-(retinylidene)lysine. Topologically, residues 340-377 (HPRYRQELQKRCKWMGIHEPETTSDATSAQTEKIKTDE) are cytoplasmic.

This sequence belongs to the G-protein coupled receptor 1 family. Opsin subfamily. Phosphorylated on some or all of the serine and threonine residues present in the C-terminal region. In terms of tissue distribution, expressed in the dorsal region of the retina and sparsely expressed in the ventral region.

Its subcellular location is the membrane. Visual pigments are the light-absorbing molecules that mediate vision. They consist of an apoprotein, opsin, covalently linked to 11-cis-retinal. The polypeptide is Opsin, blue-sensitive (BLOP) (Apis mellifera (Honeybee)).